A 496-amino-acid polypeptide reads, in one-letter code: Lysine--tRNA ligase (496 aa).

2 residues coordinate Mg(2+): Glu-409 and Glu-416.

Belongs to the class-II aminoacyl-tRNA synthetase family. Homodimer. Mg(2+) is required as a cofactor.

Its subcellular location is the cytoplasm. It carries out the reaction tRNA(Lys) + L-lysine + ATP = L-lysyl-tRNA(Lys) + AMP + diphosphate. The sequence is that of Lysine--tRNA ligase from Streptococcus pneumoniae (strain CGSP14).